The chain runs to 52 residues: Defensin-like protein 2B (52 aa).

Disulfide bonds link cysteine 4/cysteine 52, cysteine 16/cysteine 37, cysteine 22/cysteine 46, and cysteine 26/cysteine 48.

Forms oligomers in its native state.

Possesses antifungal activity sensitive to inorganic cations. This Sinapis alba (White mustard) protein is Defensin-like protein 2B.